Reading from the N-terminus, the 418-residue chain is Nickel and cobalt resistance protein CnrC (418 aa).

A signal peptide spans 1-29; the sequence is MKQVISSFLCRPRFVGSAIWLLPVALSHA.

Belongs to the outer membrane factor (OMF) (TC 1.B.17) family.

The products of the genes cnrA, cnrB, and cnrC are likely to form a membrane-bound protein complex catalyzing an energy-dependent efflux of Ni(2+) and Co(2+). The mechanism of action of the CnrCBA complex may be that of a proton/cation antiporter. This Cupriavidus metallidurans (strain ATCC 43123 / DSM 2839 / NBRC 102507 / CH34) (Ralstonia metallidurans) protein is Nickel and cobalt resistance protein CnrC (cnrC).